We begin with the raw amino-acid sequence, 620 residues long: Cryptochrome-1 (620 aa).

A Photolyase/cryptochrome alpha/beta domain is found at 3 to 132; the sequence is VNAVHWFRKG…EVIVRISHTL (130 aa). Short sequence motifs (LIR) lie at residues 50-54, 82-87, and 151-156; these read NRWRF, DVFPRL, and KRFQTL. S252 provides a ligand contact to FAD. 4 short sequence motifs (LIR) span residues 255 to 260, 271 to 276, 285 to 290, and 335 to 339; these read LRFGCL, DLYKKV, SLYGQL, and TGFPW. Q289 serves as a coordination point for FAD. Residue H355 participates in FAD binding. The LIR 8 signature appears at 379 to 384; that stretch reads KVFEEL. 387 to 389 provides a ligand contact to FAD; it reads DAD. 5 short sequence motifs (LIR) span residues 395-400, 411-416, 430-435, 486-491, and 492-497; these read GSWMWL, HCYCPV, RRYLPV, QIYQQL, and SRYRGL. The interval 593-620 is disordered; the sequence is TGISAGKRPNPEEETQSVGPKVQRQSTN.

It belongs to the DNA photolyase class-1 family. As to quaternary structure, component of the circadian core oscillator, which includes the CRY proteins, CLOCK or NPAS2, BMAL1 or BMAL2, CSNK1E, and the PER proteins. FAD is required as a cofactor. The cofactor is (6R)-5,10-methylene-5,6,7,8-tetrahydrofolate. As to expression, expressed in the retina.

The protein localises to the cytoplasm. It localises to the nucleus. In terms of biological role, transcriptional repressor which forms a core component of the circadian clock. The circadian clock, an internal time-keeping system, regulates various physiological processes through the generation of approximately 24 hour circadian rhythms in gene expression, which are translated into rhythms in metabolism and behavior. It is derived from the Latin roots 'circa' (about) and 'diem' (day) and acts as an important regulator of a wide array of physiological functions including metabolism, sleep, body temperature, blood pressure, endocrine, immune, cardiovascular, and renal function. Consists of two major components: the central clock, residing in the suprachiasmatic nucleus (SCN) of the brain, and the peripheral clocks that are present in nearly every tissue and organ system. Both the central and peripheral clocks can be reset by environmental cues, also known as Zeitgebers (German for 'timegivers'). The predominant Zeitgeber for the central clock is light, which is sensed by retina and signals directly to the SCN. The central clock entrains the peripheral clocks through neuronal and hormonal signals, body temperature and feeding-related cues, aligning all clocks with the external light/dark cycle. Circadian rhythms allow an organism to achieve temporal homeostasis with its environment at the molecular level by regulating gene expression to create a peak of protein expression once every 24 hours to control when a particular physiological process is most active with respect to the solar day. Transcription and translation of core clock components (CLOCK, NPAS2, BMAL1, BMAL2, PER1, PER2, PER3, CRY1 and CRY2) plays a critical role in rhythm generation, whereas delays imposed by post-translational modifications (PTMs) are important for determining the period (tau) of the rhythms (tau refers to the period of a rhythm and is the length, in time, of one complete cycle). A diurnal rhythm is synchronized with the day/night cycle, while the ultradian and infradian rhythms have a period shorter and longer than 24 hours, respectively. Disruptions in the circadian rhythms contribute to the pathology of cardiovascular diseases, cancer, metabolic syndromes and aging. A transcription/translation feedback loop (TTFL) forms the core of the molecular circadian clock mechanism. Transcription factors, CLOCK or NPAS2 and BMAL1 or BMAL2, form the positive limb of the feedback loop, act in the form of a heterodimer and activate the transcription of core clock genes and clock-controlled genes (involved in key metabolic processes), harboring E-box elements (5'-CACGTG-3') within their promoters. The core clock genes: PER1/2/3 and CRY1/2 which are transcriptional repressors form the negative limb of the feedback loop and interact with the CLOCK|NPAS2-BMAL1|BMAL2 heterodimer inhibiting its activity and thereby negatively regulating their own expression. This heterodimer also activates nuclear receptors NR1D1/2 and RORA/B/G, which form a second feedback loop and which activate and repress BMAL1 transcription, respectively. CRY1 and CRY2 have redundant functions but also differential and selective contributions at least in defining the pace of the SCN circadian clock and its circadian transcriptional outputs. More potent transcriptional repressor in cerebellum and liver than CRY2, though more effective in lengthening the period of the SCN oscillator. On its side, CRY2 seems to play a critical role in tuning SCN circadian period by opposing the action of CRY1. With CRY2, is dispensable for circadian rhythm generation but necessary for the development of intercellular networks for rhythm synchrony. Capable of translocating circadian clock core proteins such as PER proteins to the nucleus. Interacts with CLOCK-BMAL1 independently of PER proteins and is found at CLOCK-BMAL1-bound sites, suggesting that CRY may act as a molecular gatekeeper to maintain CLOCK-BMAL1 in a poised and repressed state until the proper time for transcriptional activation. The polypeptide is Cryptochrome-1 (CRY1) (Erithacus rubecula (European robin)).